Reading from the N-terminus, the 461-residue chain is MGRTREAGCVAAGMVIGAGACYCVYRLTWGKDENEKLWDDEDEEEEEEEESCSGKPEIGGKTVKERKTHVGVGAGAKPQDDSKSKAEANVGPENGPDVKKEVYPESHSEGGLEAKAKALFKSLKEQASAKAGRGIRFPNISRIRTLTSSLPCPGGRGGGCHPGRTGSRARNRTSGKVKRKNRSKSNKAPATAWPVRRGKFSFPYKIDDILSAPDLQKVLNILERTNDPFTQEVALVTLGNNAAYSFNQNAIRELGGVPIIAKLIKTRDPIIREKTYNALNNLSVNSENQGKIKTYISQVCDDTMVCRLDSAVQMAGLRLLTNMTVTNHYQHLLSYSFPDFFALLFLGNHFTKIQTMKLIINFTENPAMTRELVSCKVPSELISLFNKEWDREILLNILTLFENINDNIKSEGLASSRKEFSRSSLFFLFKESGVCVKKIKALASHKDLVVKVKVLKVLTKL.

Topologically, residues Met1–Glu6 are mitochondrial intermembrane. Mitochondrion outer membrane (MOM)-targeting sequence regions lie at residues Met1–Glu6 and Arg26–Lys36. A helical; Signal-anchor transmembrane segment spans residues Ala7–Trp29. The Cytoplasmic portion of the chain corresponds to Gly30–Leu461. 2 disordered regions span residues Asn34–Gly110 and Ser148–Ala192. Residues Trp38 to Ser51 are compositionally biased toward acidic residues. Residues Pro96–Gly110 are compositionally biased toward basic and acidic residues. Basic residues predominate over residues Ser167–Ser185. ARM repeat units lie at residues Pro203 to Ala243, Ser245 to Val284, Pro366 to Asp406, and Ser423 to Leu461.

This sequence belongs to the eutherian X-chromosome-specific Armcx family. In terms of assembly, interacts with MIRO1.

The protein localises to the mitochondrion. It is found in the mitochondrion outer membrane. In terms of biological role, regulates mitochondrial transport during axon regeneration. Increases the proportion of motile mitochondria by recruiting stationary mitochondria into the motile pool. Enhances mitochondria movement and neurite growth in both adult axons and embryonic neurons. Promotes neuronal survival and axon regeneration after nerve injury. May link mitochondria to the Trak1-kinesin motor complex via its interaction with MIRO1. The chain is Armadillo repeat-containing X-linked protein 1 (Armcx1) from Rattus norvegicus (Rat).